The primary structure comprises 120 residues: Non-specific lipid-transfer protein (120 aa).

The first 26 residues, 1 to 26 (MASSMSLKLACVVVLCMVVGAPLAQG), serve as a signal peptide directing secretion. 3 cysteine pairs are disulfide-bonded: cysteine 40–cysteine 56, cysteine 57–cysteine 102, and cysteine 77–cysteine 116.

It belongs to the plant LTP family.

In terms of biological role, plant non-specific lipid-transfer proteins transfer phospholipids as well as galactolipids across membranes. May play a role in wax or cutin deposition in the cell walls of expanding epidermal cells and certain secretory tissues. This chain is Non-specific lipid-transfer protein, found in Gossypium hirsutum (Upland cotton).